Consider the following 132-residue polypeptide: Small ribosomal subunit protein uS8 (132 aa).

The protein belongs to the universal ribosomal protein uS8 family. As to quaternary structure, part of the 30S ribosomal subunit. Contacts proteins S5 and S12.

In terms of biological role, one of the primary rRNA binding proteins, it binds directly to 16S rRNA central domain where it helps coordinate assembly of the platform of the 30S subunit. The polypeptide is Small ribosomal subunit protein uS8 (Lacticaseibacillus casei (strain BL23) (Lactobacillus casei)).